The sequence spans 242 residues: ATP synthase subunit a (242 aa).

The next 5 helical transmembrane spans lie at 21-41, 83-103, 118-137, 175-195, and 198-218; these read LASV…AIVC, AVTL…FAIV, ATVT…YYGI, LYGN…LFFE, and AWGW…SIFV.

This sequence belongs to the ATPase A chain family. F-type ATPases have 2 components, CF(1) - the catalytic core - and CF(0) - the membrane proton channel. CF(1) has five subunits: alpha(3), beta(3), gamma(1), delta(1), epsilon(1). CF(0) has three main subunits: a(1), b(2) and c(9-12). The alpha and beta chains form an alternating ring which encloses part of the gamma chain. CF(1) is attached to CF(0) by a central stalk formed by the gamma and epsilon chains, while a peripheral stalk is formed by the delta and b chains.

It is found in the cell membrane. Functionally, key component of the proton channel; it plays a direct role in the translocation of protons across the membrane. The sequence is that of ATP synthase subunit a from Staphylococcus epidermidis (strain ATCC 35984 / DSM 28319 / BCRC 17069 / CCUG 31568 / BM 3577 / RP62A).